The following is a 529-amino-acid chain: Bifunctional purine biosynthesis protein PurH (529 aa).

Positions 1–148 constitute an MGS-like domain; that stretch reads MQQRRPVRRA…KNHKDVAIVV (148 aa). Position 287 is an N6-acetyllysine (K287).

Belongs to the PurH family.

The catalysed reaction is (6R)-10-formyltetrahydrofolate + 5-amino-1-(5-phospho-beta-D-ribosyl)imidazole-4-carboxamide = 5-formamido-1-(5-phospho-D-ribosyl)imidazole-4-carboxamide + (6S)-5,6,7,8-tetrahydrofolate. The enzyme catalyses IMP + H2O = 5-formamido-1-(5-phospho-D-ribosyl)imidazole-4-carboxamide. The protein operates within purine metabolism; IMP biosynthesis via de novo pathway; 5-formamido-1-(5-phospho-D-ribosyl)imidazole-4-carboxamide from 5-amino-1-(5-phospho-D-ribosyl)imidazole-4-carboxamide (10-formyl THF route): step 1/1. Its pathway is purine metabolism; IMP biosynthesis via de novo pathway; IMP from 5-formamido-1-(5-phospho-D-ribosyl)imidazole-4-carboxamide: step 1/1. The chain is Bifunctional purine biosynthesis protein PurH from Escherichia coli O9:H4 (strain HS).